The primary structure comprises 733 residues: MEGFDDAGVFFSDNFGGDNQQDAQINLQAVKKKYKEFIRTFNEENFFYKYRDTLKRNYLNGRYFLEIEMEDLVGFDETLADKLNKQPTEHLEIFEEAAREVADEITAPRPEHEEHMHDIQILLSSNANPTNIRQLKSDCVSKLVKIAGIIVAASGISAKATRMSIQCLSCSTVIPNLKVNPGLEGYALPRKCNTEQAGRPKCPLDPFFIMPDKCKCVDFQTLKLQELPDFVPQGEIPRHLQLFCDRSLCERVVPGNRVLIQGIYSIRKVGKPSRRDGREKAVVGVRAPYMRVVGITVDSEGAGAISRYSNITSDEEEHFRRMAASGDIYERLSQSLAPSIFGSRDIKKAITCMLFGGSRKRLPDGLCRRGDINVLLLGDPGTAKSQLLKFVEKVAPIAVYTSGKGSSAAGLTASVMKDPQTRNFVMEGGAMVLADGGVVCIDEFDKMREDDRVAIHEAMEQQTISIAKAGITTTLNSRCSVLAAANSIFGRWDDTKGEENIDFMPTILSRFDMIFIVKDIHDESRDITLAKHIINVHLSSNKSAPSEPAEGEISLSTFKKYIHYCRTHCGPRLSEAAGEKLKSRYVLMRSGAGQQEKASDKRLSIPITVRQLEAVIRISESLAKIRLQPFATDEHVNEALRLFQVSTLDAAMTGSLAGAEGFTTEEDQETLNRIEKQLKRRFAIGSQVSEQNILQDFLRQKYEERTVMKVIHTMIRRGELQHRMQRKMLYRIC.

An MCM domain is found at 328–534 (IYERLSQSLA…RDITLAKHII (207 aa)). Position 368 (arginine 368) interacts with ADP. The short motif at 509-512 (SRFD) is the Arginine finger element.

This sequence belongs to the MCM family. As to quaternary structure, component of the Mcm2-7 complex. The complex forms a toroidal hexameric ring with the proposed subunit order Mcm2-Mcm6-Mcm4-Mcm7-Mcm3-Mcm5.

Its subcellular location is the nucleus. It is found in the cytoplasm. The protein localises to the cytosol. It carries out the reaction ATP + H2O = ADP + phosphate + H(+). Its function is as follows. Acts as a component of the Mcm2-7 complex (Mcm complex) which is the putative replicative helicase essential for 'once per cell cycle' DNA replication initiation and elongation in eukaryotic cells. Core component of CDC45-MCM-GINS (CMG) helicase, the molecular machine that unwinds template DNA during replication, and around which the replisome is built. The active ATPase sites in the Mcm2-7 ring are formed through the interaction surfaces of two neighboring subunits such that a critical structure of a conserved arginine finger motif is provided in trans relative to the ATP-binding site of the Walker A box of the adjacent subunit. The six ATPase active sites, however, are likely to contribute differentially to the complex helicase activity. In Drosophila melanogaster (Fruit fly), this protein is DNA replication licensing factor Mcm5 (Mcm5).